The following is a 191-amino-acid chain: Cytochrome c oxidase assembly protein CtaG (191 aa).

Residues methionine 1–threonine 9 lie on the Cytoplasmic side of the membrane. Residues alanine 10–phenylalanine 30 traverse the membrane as a helical; Signal-anchor for type II membrane protein segment. The Periplasmic portion of the chain corresponds to tyrosine 31 to asparagine 191.

The protein belongs to the COX11/CtaG family.

The protein resides in the cell inner membrane. Functionally, exerts its effect at some terminal stage of cytochrome c oxidase synthesis, probably by being involved in the insertion of the copper B into subunit I. In Cereibacter sphaeroides (strain ATCC 17023 / DSM 158 / JCM 6121 / CCUG 31486 / LMG 2827 / NBRC 12203 / NCIMB 8253 / ATH 2.4.1.) (Rhodobacter sphaeroides), this protein is Cytochrome c oxidase assembly protein CtaG.